The sequence spans 916 residues: Internalin J (916 aa).

The signal sequence occupies residues 1-25; that stretch reads MKTSKIIIASLVSLTLVSNPILTFA. LRR repeat units follow at residues 94 to 115, 116 to 136, 137 to 157, 158 to 179, 180 to 200, 201 to 221, 222 to 243, 244 to 263, 264 to 284, 285 to 306, 316 to 325, 338 to 357, 359 to 368, and 380 to 402; these read TLTS…EKLT, GLTK…SQNT, NLTY…TPLT, KLTY…QNPL, LTYL…HNTQ, LTEL…TPQT, QLTT…QNKL, LNRL…NQNI, QLTF…TPLT, QLTY…TLSK, DLLEIDLTHN, KIKE…DCQA, GITELDLSQN, and ELTK…NAHI. MucBP domains follow at residues 506 to 568, 576 to 638, 646 to 708, 717 to 779, and 787 to 849; these read PIKG…SQSV, IVAA…SQTV, IVAA…AQTV, and APEK…SQTV. A disordered region spans residues 862–888; sequence PLPDKKTTKPSNLKTTEVKKASDTLPK. The LPXTG sorting signal signature appears at 886 to 890; sequence LPKTG. Threonine 889 carries the pentaglycyl murein peptidoglycan amidated threonine modification. The propeptide at 890–916 is removed by sortase; the sequence is GDSTPWKSALLGVFLSSTALVIWKKKK.

Belongs to the internalin family.

It is found in the secreted. The protein localises to the cell wall. Functionally, involved in several steps of L.monocytogenes infection, probably improves adhesin to host cells. The polypeptide is Internalin J (inlJ) (Listeria monocytogenes serotype 4b (strain F2365)).